We begin with the raw amino-acid sequence, 217 residues long: Formate dehydrogenase, nitrate-inducible, cytochrome b556(Fdn) subunit (217 aa).

Residues 1 to 11 (MSKSKMIVRTK) are Cytoplasmic-facing. A helical membrane pass occupies residues 12-36 (FIDRACHWTVVICFFLVALSGISFF). Histidine 18 provides a ligand contact to heme b. Topologically, residues 37–52 (FPTLQWLTQTFGTPQM) are periplasmic. The helical transmembrane segment at 53–74 (GRILHPFFGIAIFVALMFMFVR) threads the bilayer. Histidine 57 is a binding site for heme b. Over 75–110 (FVHHNIPDKKDIPWLLNIVEVLKGNEHKVADVGKYN) the chain is Cytoplasmic. A helical transmembrane segment spans residues 111–134 (AGQKMMFWSIMSMIFVLLVTGVII). Topologically, residues 135 to 150 (WRPYFAQYFPMQVVRY) are periplasmic. A helical transmembrane segment spans residues 151-175 (SLLIHAAAGIILIHAILIHMYMAFW). Positions 155 and 169 each coordinate heme b. Residue histidine 169 coordinates a menaquinone. Topologically, residues 176 to 217 (VKGSIKGMIEGKVSRRWAKKHHPRWYREIEKAEAKKESEEGI) are cytoplasmic.

It belongs to the formate dehydrogenase gamma subunit family. In terms of assembly, trimer of heterotrimers, consisting of subunits alpha, beta and gamma. The cofactor is heme.

Its subcellular location is the cell inner membrane. Its function is as follows. Formate dehydrogenase allows the bacterium to use formate as major electron donor during anaerobic respiration, when nitrate is used as electron acceptor. Subunit gamma is the cytochrome b556 component of the formate dehydrogenase-N, and also contains a menaquinone reduction site that receives electrons from the beta subunit (FdnH), through its hemes. Formate dehydrogenase-N is part of a system that generates proton motive force, together with the dissimilatory nitrate reductase (Nar). In Escherichia coli O157:H7, this protein is Formate dehydrogenase, nitrate-inducible, cytochrome b556(Fdn) subunit (fdnI).